A 504-amino-acid chain; its full sequence is L-amino-acid oxidase (504 aa).

The signal sequence occupies residues 1–18; the sequence is MNIFFMFSLLFLATLGSC. The cysteines at positions 28 and 191 are disulfide-linked. Residues 61 to 62, 81 to 82, R89, and 105 to 108 each bind FAD; these read MS, EA, and GPMR. R108 provides a ligand contact to substrate. Residue N190 is glycosylated (N-linked (GlcNAc...) asparagine). Residue H241 participates in substrate binding. An FAD-binding site is contributed by V279. Residues C349 and C430 are joined by a disulfide bond. N379 carries an N-linked (GlcNAc...) asparagine glycan. Residue Y390 coordinates substrate. Residues E475 and 482–487 each bind FAD; that span reads GWIDST. 482–483 is a substrate binding site; the sequence is GW.

This sequence belongs to the flavin monoamine oxidase family. FIG1 subfamily. As to quaternary structure, homodimer; non-covalently linked. The cofactor is FAD. As to expression, expressed by the venom gland.

Its subcellular location is the secreted. The catalysed reaction is an L-alpha-amino acid + O2 + H2O = a 2-oxocarboxylate + H2O2 + NH4(+). Catalyzes an oxidative deamination of predominantly hydrophobic and aromatic L-amino acids, thus producing hydrogen peroxide that may contribute to the diverse toxic effects of this enzyme. Exhibits diverse biological activities, such as hemorrhage, hemolysis, edema, apoptosis of vascular endothelial cells or tumor cell lines, antibacterial and antiparasitic activities, as well as regulation of platelet aggregation. Its effect on platelets is controversial, since it either induces aggregation or inhibits agonist-induced aggregation. These different effects are probably due to different experimental conditions. The protein is L-amino-acid oxidase of Echis ocellatus (Ocellated saw-scaled viper).